Reading from the N-terminus, the 158-residue chain is Large ribosomal subunit protein uL16 (158 aa).

The protein belongs to the universal ribosomal protein uL16 family. In terms of assembly, part of the 50S ribosomal subunit.

Binds 23S rRNA and is also seen to make contacts with the A and possibly P site tRNAs. In Synechococcus sp. (strain CC9605), this protein is Large ribosomal subunit protein uL16.